A 408-amino-acid chain; its full sequence is uncharacterized protein (408 aa).

Disordered stretches follow at residues 218 to 265 (EPTA…TSER) and 367 to 408 (MESE…ETPN). Over residues 369 to 379 (SEVINSSSSTS) the composition is skewed to low complexity. The span at 394 to 408 (IVEEVPETAENETPN) shows a compositional bias: acidic residues.

The protein to C.elegans C05E11.1.

This is an uncharacterized protein from Arabidopsis thaliana (Mouse-ear cress).